A 296-amino-acid chain; its full sequence is Zinc finger CCCH-type antiviral protein 1-like (296 aa).

Alanine 2 carries the post-translational modification N-acetylalanine. 2 C3H1-type zinc fingers span residues leucine 111–histidine 136 and valine 198–isoleucine 219.

This chain is Zinc finger CCCH-type antiviral protein 1-like (Zc3hav1l), found in Mus musculus (Mouse).